A 367-amino-acid chain; its full sequence is Innexin inx4 (367 aa).

At 1–21 (MYAAVKPLSKYLQFKSVHIYD) the chain is on the cytoplasmic side. A helical transmembrane segment spans residues 22–42 (AIFTLHSKVTVALLLACTFLL). Over 43 to 110 (SSKQYFGDPI…PENRNYITYY (68 aa)) the chain is Extracellular. Residues 111-131 (QWVVLVLLLESFVFYMPAFLW) form a helical membrane-spanning segment. Over 132–186 (KIWEGGRLKHLCDDFHKMAVCKDKSRTHLRVLVNYFSSDYKETHFRYFVSYVFCE) the chain is Cytoplasmic. The helical transmembrane segment at 187-207 (ILNLSISILNFLLLDVFFGGF) threads the bilayer. Topologically, residues 208 to 268 (WGRYRNALLS…LLPLNILNEK (61 aa)) are extracellular. A helical membrane pass occupies residues 269-289 (IFAFLWIWFILVAMLISLKFL). Residues 290–367 (YRLATVLYPG…IKIPPGADKI (78 aa)) are Cytoplasmic-facing.

It belongs to the pannexin family. Expressed in nurse cells and oocyte during oogenesis. Uniform expression in imaginal wing disk and low expression in developing imaginal CNS. Expressed in embryonic pole cells and primordial germ cells.

The protein resides in the cell membrane. Its subcellular location is the cell junction. It localises to the gap junction. Its function is as follows. Structural component of the gap junctions in germline cells. Required for differentiation and survival of germline cysts in females and of spermatogonia in males; gap junctional communication between spermatogonia and somatic cyst cells may be required for normal differentiation and survival of spermatogonia. This Drosophila melanogaster (Fruit fly) protein is Innexin inx4 (zpg).